A 208-amino-acid polypeptide reads, in one-letter code: FMN-dependent NADH:quinone oxidoreductase (208 aa).

FMN contacts are provided by residues 17–19 (SNS), 99–102 (MWNL), and 143–146 (SRGG).

Belongs to the azoreductase type 1 family. In terms of assembly, homodimer. Requires FMN as cofactor.

It catalyses the reaction 2 a quinone + NADH + H(+) = 2 a 1,4-benzosemiquinone + NAD(+). The enzyme catalyses N,N-dimethyl-1,4-phenylenediamine + anthranilate + 2 NAD(+) = 2-(4-dimethylaminophenyl)diazenylbenzoate + 2 NADH + 2 H(+). Quinone reductase that provides resistance to thiol-specific stress caused by electrophilic quinones. Its function is as follows. Also exhibits azoreductase activity. Catalyzes the reductive cleavage of the azo bond in aromatic azo compounds to the corresponding amines. This chain is FMN-dependent NADH:quinone oxidoreductase, found in Staphylococcus aureus (strain COL).